The chain runs to 196 residues: Probable thymidylate kinase (196 aa).

Position 9–16 (9–16) interacts with ATP; it reads GIDGSGKT.

It belongs to the thymidylate kinase family.

The enzyme catalyses dTMP + ATP = dTDP + ADP. This chain is Probable thymidylate kinase, found in Methanococcus aeolicus (strain ATCC BAA-1280 / DSM 17508 / OCM 812 / Nankai-3).